The sequence spans 325 residues: 4-hydroxy-3-methylbut-2-enyl diphosphate reductase (325 aa).

A [4Fe-4S] cluster-binding site is contributed by cysteine 21. Positions 50 and 83 each coordinate (2E)-4-hydroxy-3-methylbut-2-enyl diphosphate. Residues histidine 50 and histidine 83 each contribute to the dimethylallyl diphosphate site. 2 residues coordinate isopentenyl diphosphate: histidine 50 and histidine 83. Cysteine 105 is a binding site for [4Fe-4S] cluster. Histidine 133 provides a ligand contact to (2E)-4-hydroxy-3-methylbut-2-enyl diphosphate. Histidine 133 contacts dimethylallyl diphosphate. Histidine 133 contributes to the isopentenyl diphosphate binding site. The active-site Proton donor is glutamate 135. Threonine 173 contributes to the (2E)-4-hydroxy-3-methylbut-2-enyl diphosphate binding site. [4Fe-4S] cluster is bound at residue cysteine 203. (2E)-4-hydroxy-3-methylbut-2-enyl diphosphate-binding residues include serine 231, serine 232, asparagine 233, and serine 275. Serine 231, serine 232, asparagine 233, and serine 275 together coordinate dimethylallyl diphosphate. Isopentenyl diphosphate contacts are provided by serine 231, serine 232, asparagine 233, and serine 275.

Belongs to the IspH family. [4Fe-4S] cluster is required as a cofactor.

The enzyme catalyses isopentenyl diphosphate + 2 oxidized [2Fe-2S]-[ferredoxin] + H2O = (2E)-4-hydroxy-3-methylbut-2-enyl diphosphate + 2 reduced [2Fe-2S]-[ferredoxin] + 2 H(+). It catalyses the reaction dimethylallyl diphosphate + 2 oxidized [2Fe-2S]-[ferredoxin] + H2O = (2E)-4-hydroxy-3-methylbut-2-enyl diphosphate + 2 reduced [2Fe-2S]-[ferredoxin] + 2 H(+). It functions in the pathway isoprenoid biosynthesis; dimethylallyl diphosphate biosynthesis; dimethylallyl diphosphate from (2E)-4-hydroxy-3-methylbutenyl diphosphate: step 1/1. It participates in isoprenoid biosynthesis; isopentenyl diphosphate biosynthesis via DXP pathway; isopentenyl diphosphate from 1-deoxy-D-xylulose 5-phosphate: step 6/6. Catalyzes the conversion of 1-hydroxy-2-methyl-2-(E)-butenyl 4-diphosphate (HMBPP) into a mixture of isopentenyl diphosphate (IPP) and dimethylallyl diphosphate (DMAPP). Acts in the terminal step of the DOXP/MEP pathway for isoprenoid precursor biosynthesis. This Bordetella pertussis (strain Tohama I / ATCC BAA-589 / NCTC 13251) protein is 4-hydroxy-3-methylbut-2-enyl diphosphate reductase.